The sequence spans 660 residues: Zinc transporter ZIP4 (660 aa).

The signal sequence occupies residues 1–22; the sequence is MLPKSVTQGLVLALLVGTVAVA. Residues 23–337 lie on the Extracellular side of the membrane; the sequence is RPRNLLSLLA…QDQLSQTERY (315 aa). 3 disulfides stabilise this stretch: Cys56-Cys61, Cys64-Cys110, and Cys160-Cys195. N-linked (GlcNAc...) asparagine glycans are attached at residues Asn192 and Asn219. Residues 233–273 are disordered; it reads GVGGEDHSDHDDHGDHADHSHPDRKASHQDSELHTPHNSNS. Residues 236–267 are compositionally biased toward basic and acidic residues; sequence GEDHSDHDDHGDHADHSHPDRKASHQDSELHT. The N-linked (GlcNAc...) asparagine glycan is linked to Asn272. A disulfide bond links Cys280 and Cys319. Residues 338 to 358 form a helical membrane-spanning segment; sequence LYGSLATLLICLCAVFGLLLL. Over 359–376 the chain is Cytoplasmic; it reads TCAKCSTATHYIMQTFLS. A helical membrane pass occupies residues 377 to 397; sequence LAVGALTGDALLHLIPKVLGL. Residues 398 to 420 are Extracellular-facing; that stretch reads HTHGGEGHTHEEEVGVGGQATWR. A helical transmembrane segment spans residues 421–441; the sequence is LLAVLGGFYIFFLFESFFNLL. The Cytoplasmic portion of the chain corresponds to 442 to 511; that stretch reads LPRDQDSEKD…LRAELRLLPY (70 aa). Residues 465-467 carry the Essential for SLC39A4 endocytosis motif; it reads LQL. The chain crosses the membrane as a helical span at residues 512–531; it reads LITLGDAVHNFADGLAVGAA. Zn(2+) contacts are provided by His520, Asn521, and Asp524. At 532-539 the chain is on the extracellular side; sequence FSSSWKTG. Residues 540-566 form a helical membrane-spanning segment; the sequence is LATSLAVFCHELPHELGDFAALLHAGL. Residues His549, Glu550, and His553 each coordinate Zn(2+). Residues 567–571 are Cytoplasmic-facing; it reads SVKRA. The helical transmembrane segment at 572 to 592 threads the bilayer; sequence LLLNLASALTAFAGLYVALAV. The Extracellular segment spans residues 593 to 599; the sequence is GVGEEGE. The helical transmembrane segment at 600-620 threads the bilayer; the sequence is AWILAVATGLFLYVALCDMLP. The Cytoplasmic portion of the chain corresponds to 621-630; it reads AMMNVRDQRP. A helical membrane pass occupies residues 631–651; the sequence is WLLFLLHNVGLLGGWTVLLLL. The Extracellular segment spans residues 652-660; that stretch reads SLYEDNITF. Asn657 carries an N-linked (GlcNAc...) asparagine glycan.

This sequence belongs to the ZIP transporter (TC 2.A.5) family. As to quaternary structure, homodimer. Homodimerization is mediated by the transmembrane domain. Post-translationally, the extracellular N-terminal ectodomain is cleaved when cells are Zn(2+) deficient, N-terminally cleaved SLC39A4 is then internalized faster. Under excess Zn(2+) conditions, SLC39A4 on the cell surface is rapidly endocytosed, ubiquitinated, and degraded. In terms of processing, N-glycosylated. As to expression, highly expressed in the small intestine and embryonic visceral yolk sac. Weakly expressed in the stomach and liver.

It is found in the cell membrane. Its subcellular location is the recycling endosome membrane. The protein resides in the apical cell membrane. It catalyses the reaction Zn(2+)(in) = Zn(2+)(out). Functionally, selective transporter that mediates the uptake of Zn(2+). Plays an essential role for dietary zinc uptake from small intestine. The Zn(2+) uniporter activity is regulated by zinc availability. Also exhibits polyspecific binding and transport of Cu(2+), Cd(2+) and possibly Ni(2+) but at higher concentrations. In Mus musculus (Mouse), this protein is Zinc transporter ZIP4 (Slc39a4).